A 310-amino-acid chain; its full sequence is Tagatose-6-phosphate kinase (310 aa).

This sequence belongs to the carbohydrate kinase PfkB family. LacC subfamily.

The enzyme catalyses D-tagatofuranose 6-phosphate + ATP = D-tagatofuranose 1,6-bisphosphate + ADP + H(+). The protein operates within carbohydrate metabolism; D-tagatose 6-phosphate degradation; D-glyceraldehyde 3-phosphate and glycerone phosphate from D-tagatose 6-phosphate: step 1/2. The sequence is that of Tagatose-6-phosphate kinase from Staphylococcus aureus (strain bovine RF122 / ET3-1).